A 298-amino-acid polypeptide reads, in one-letter code: ATP synthase gamma chain (298 aa).

This sequence belongs to the ATPase gamma chain family. As to quaternary structure, F-type ATPases have 2 components, CF(1) - the catalytic core - and CF(0) - the membrane proton channel. CF(1) has five subunits: alpha(3), beta(3), gamma(1), delta(1), epsilon(1). CF(0) has three main subunits: a, b and c.

It is found in the cell membrane. Produces ATP from ADP in the presence of a proton gradient across the membrane. The gamma chain is believed to be important in regulating ATPase activity and the flow of protons through the CF(0) complex. This chain is ATP synthase gamma chain, found in Mycobacterium leprae (strain Br4923).